The following is a 351-amino-acid chain: Protein-glutamate methylesterase/protein-glutamine glutaminase (351 aa).

The Response regulatory domain occupies 3-120 (KTLVVDDSAL…EISKIENELV (118 aa)). D54 bears the 4-aspartylphosphate mark. The region spanning 160–347 (ILIGSSTGGP…EQIVRMIEVK (188 aa)) is the CheB-type methylesterase domain. Catalysis depends on residues S165, H192, and D289.

This sequence belongs to the CheB family. Post-translationally, phosphorylated by CheA. Phosphorylation of the N-terminal regulatory domain activates the methylesterase activity.

The protein localises to the cytoplasm. The catalysed reaction is [protein]-L-glutamate 5-O-methyl ester + H2O = L-glutamyl-[protein] + methanol + H(+). The enzyme catalyses L-glutaminyl-[protein] + H2O = L-glutamyl-[protein] + NH4(+). Involved in chemotaxis. Part of a chemotaxis signal transduction system that modulates chemotaxis in response to various stimuli. Catalyzes the demethylation of specific methylglutamate residues introduced into the chemoreceptors (methyl-accepting chemotaxis proteins or MCP) by CheR. Also mediates the irreversible deamidation of specific glutamine residues to glutamic acid. This Methanococcoides burtonii (strain DSM 6242 / NBRC 107633 / OCM 468 / ACE-M) protein is Protein-glutamate methylesterase/protein-glutamine glutaminase.